The following is a 134-amino-acid chain: ATP synthase epsilon chain, chloroplastic (134 aa).

This sequence belongs to the ATPase epsilon chain family. In terms of assembly, F-type ATPases have 2 components, CF(1) - the catalytic core - and CF(0) - the membrane proton channel. CF(1) has five subunits: alpha(3), beta(3), gamma(1), delta(1), epsilon(1). CF(0) has three main subunits: a, b and c.

It localises to the plastid. Its subcellular location is the chloroplast thylakoid membrane. Its function is as follows. Produces ATP from ADP in the presence of a proton gradient across the membrane. The protein is ATP synthase epsilon chain, chloroplastic of Porphyra purpurea (Red seaweed).